The following is a 332-amino-acid chain: MASTDFKDYYQILGVTKTASEAEIKKQFRKLALKYHPDKNPGDKAAEEKFKEISEAYEVLSDPEKRQKYDQFGRYWQQAGTAGQPSGSYGPGVGVDFGGFDFSQYGNFDEFINELLGRFNTPGGGGQRTSYSYSTGGPGFNDFGGFGNAQAPAGDREATLQLTLAEAFRGVEKRLNLGEEMVTVRIPAGAKNGSRVRVRGKGMASPYGQRGDLYLNLQLTPHPFFQFEGDNLVCELAIAPDEAVLGADISVPTPDGMVRMKVPAGVKSGQSLRLKGKGWPNPKQGRGDQLVRLIITAPKNPSAIERECYEKIQAQRTENPRQAVEKYANLLA.

The region spanning 6 to 75 (FKDYYQILGV…RQKYDQFGRY (70 aa)) is the J domain.

The sequence is that of DnAJ-like protein slr0093 from Synechocystis sp. (strain ATCC 27184 / PCC 6803 / Kazusa).